The following is a 300-amino-acid chain: Acetylglutamate kinase (300 aa).

Residues 67-68 (GG), arginine 89, and asparagine 194 each bind substrate.

It belongs to the acetylglutamate kinase family. ArgB subfamily.

The protein localises to the cytoplasm. It carries out the reaction N-acetyl-L-glutamate + ATP = N-acetyl-L-glutamyl 5-phosphate + ADP. It functions in the pathway amino-acid biosynthesis; L-arginine biosynthesis; N(2)-acetyl-L-ornithine from L-glutamate: step 2/4. In terms of biological role, catalyzes the ATP-dependent phosphorylation of N-acetyl-L-glutamate. This is Acetylglutamate kinase from Saccharophagus degradans (strain 2-40 / ATCC 43961 / DSM 17024).